The sequence spans 101 residues: Protein Tat (101 aa).

Positions 1-24 (MEPIDPNLEPWNHPGSQPKTACNN) are interaction with human CREBBP. A transactivation region spans residues 1–48 (MEPIDPNLEPWNHPGSQPKTACNNCYCKQCCYHCQLCFTKKGLGISYG). Residues C22, C25, and C27 each coordinate Zn(2+). A cysteine-rich region spans residues 22 to 37 (CNNCYCKQCCYHCQLC). An N6-acetyllysine; by host PCAF modification is found at K28. Positions 30, 33, 34, and 37 each coordinate Zn(2+). The core stretch occupies residues 38 to 48 (FTKKGLGISYG). The segment at 48 to 101 (GRRKRKQRRRTSESSQNHQDPVPKQPLSQPGGIETGQKKSKKEVESQTTSDQFA) is disordered. The Nuclear localization signal, RNA-binding (TAR), and protein transduction signature appears at 49-57 (RRKRKQRRR). The segment at 49–86 (RRKRKQRRRTSESSQNHQDPVPKQPLSQPGGIETGQKK) is interaction with the host capping enzyme RNGTT. K51 is subject to N6-acetyllysine; by host EP300 and GCN5L2. At R52 the chain carries Asymmetric dimethylarginine; by host PRMT6. K71 participates in a covalent cross-link: Glycyl lysine isopeptide (Lys-Gly) (interchain with G-Cter in ubiquitin).

This sequence belongs to the lentiviruses Tat family. In terms of assembly, interacts with host CCNT1. Associates with the P-TEFb complex composed at least of Tat, P-TEFb (CDK9 and CCNT1), TAR RNA, RNA Pol II. Recruits the HATs CREBBP, TAF1/TFIID, EP300, PCAF and GCN5L2. Interacts with host KAT5/Tip60; this interaction targets the latter to degradation. Interacts with the host deacetylase SIRT1. Interacts with host capping enzyme RNGTT; this interaction stimulates RNGTT. Binds to host KDR, and to the host integrins ITGAV/ITGB3 and ITGA5/ITGB1. Interacts with host KPNB1/importin beta-1 without previous binding to KPNA1/importin alpha-1. Interacts with EIF2AK2. Interacts with host nucleosome assembly protein NAP1L1; this interaction may be required for the transport of Tat within the nucleus, since the two proteins interact at the nuclear rim. Interacts with host C1QBP/SF2P32; this interaction involves lysine-acetylated Tat. Interacts with the host chemokine receptors CCR2, CCR3 and CXCR4. Interacts with host DPP4/CD26; this interaction may trigger an anti-proliferative effect. Interacts with host LDLR. Interacts with the host extracellular matrix metalloproteinase MMP1. Interacts with host PRMT6; this interaction mediates Tat's methylation. Interacts with, and is ubiquitinated by MDM2/Hdm2. Interacts with host PSMC3 and HTATIP2. Interacts with STAB1; this interaction may overcome SATB1-mediated repression of IL2 and IL2RA (interleukin) in T cells by binding to the same domain than HDAC1. Interacts (when acetylated) with human CDK13, thereby increasing HIV-1 mRNA splicing and promoting the production of the doubly spliced HIV-1 protein Nef. Interacts with host TBP; this interaction modulates the activity of transcriptional pre-initiation complex. Interacts with host RELA. In terms of processing, asymmetrical arginine methylation by host PRMT6 seems to diminish the transactivation capacity of Tat and affects the interaction with host CCNT1. Post-translationally, polyubiquitination by host MDM2 does not target Tat to degradation, but activates its transactivation function and fosters interaction with CCNT1 and TAR RNA. Phosphorylated by EIF2AK2 on serine and threonine residues adjacent to the basic region important for TAR RNA binding and function. Phosphorylation of Tat by EIF2AK2 is dependent on the prior activation of EIF2AK2 by dsRNA.

Its subcellular location is the host nucleus. It localises to the host nucleolus. The protein localises to the host cytoplasm. It is found in the secreted. Transcriptional activator that increases RNA Pol II processivity, thereby increasing the level of full-length viral transcripts. Recognizes a hairpin structure at the 5'-LTR of the nascent viral mRNAs referred to as the transactivation responsive RNA element (TAR) and recruits the cyclin T1-CDK9 complex (P-TEFb complex) that will in turn hyperphosphorylate the RNA polymerase II to allow efficient elongation. The CDK9 component of P-TEFb and other Tat-activated kinases hyperphosphorylate the C-terminus of RNA Pol II that becomes stabilized and much more processive. Other factors such as HTATSF1/Tat-SF1, SUPT5H/SPT5, and HTATIP2 are also important for Tat's function. Besides its effect on RNA Pol II processivity, Tat induces chromatin remodeling of proviral genes by recruiting the histone acetyltransferases (HATs) CREBBP, EP300 and PCAF to the chromatin. This also contributes to the increase in proviral transcription rate, especially when the provirus integrates in transcriptionally silent region of the host genome. To ensure maximal activation of the LTR, Tat mediates nuclear translocation of NF-kappa-B by interacting with host RELA. Through its interaction with host TBP, Tat may also modulate transcription initiation. Tat can reactivate a latently infected cell by penetrating in it and transactivating its LTR promoter. In the cytoplasm, Tat is thought to act as a translational activator of HIV-1 mRNAs. Its function is as follows. Extracellular circulating Tat can be endocytosed by surrounding uninfected cells via the binding to several surface receptors such as CD26, CXCR4, heparan sulfate proteoglycans (HSPG) or LDLR. Neurons are rarely infected, but they internalize Tat via their LDLR. Through its interaction with nuclear HATs, Tat is potentially able to control the acetylation-dependent cellular gene expression. Modulates the expression of many cellular genes involved in cell survival, proliferation or in coding for cytokines or cytokine receptors. Tat plays a role in T-cell and neurons apoptosis. Tat induced neurotoxicity and apoptosis probably contribute to neuroAIDS. Circulating Tat also acts as a chemokine-like and/or growth factor-like molecule that binds to specific receptors on the surface of the cells, affecting many cellular pathways. In the vascular system, Tat binds to ITGAV/ITGB3 and ITGA5/ITGB1 integrins dimers at the surface of endothelial cells and competes with bFGF for heparin-binding sites, leading to an excess of soluble bFGF. The polypeptide is Protein Tat (Pan troglodytes (Chimpanzee)).